The chain runs to 179 residues: Ubiquitin-conjugating enzyme E2 C (179 aa).

The interval 1–31 (MASQNRDPAATSVAAARKGAEPSGGAARGPV) is disordered. Ala-2 is subject to N-acetylalanine. Ser-3 is modified (phosphoserine). One can recognise a UBC core domain in the interval 30-175 (PVGKRLQQEL…LQETYSKQVT (146 aa)). The active-site Glycyl thioester intermediate is Cys-114.

Belongs to the ubiquitin-conjugating enzyme family. In terms of assembly, component of the APC/C complex, composed of at least 14 distinct subunits that assemble into a complex of at least 19 chains with a combined molecular mass of around 1.2 MDa. Within this complex, directly interacts with ANAPC2. Post-translationally, autoubiquitinated by the APC/C complex, leading to its degradation by the proteasome. Its degradation plays a central role in APC/C regulation, allowing cyclin-A accumulation before S phase entry. APC/C substrates inhibit the autoubiquitination of UBE2C/UBCH10 but not its E2 function, hence APC/C remaining active until its substrates have been destroyed.

It carries out the reaction S-ubiquitinyl-[E1 ubiquitin-activating enzyme]-L-cysteine + [E2 ubiquitin-conjugating enzyme]-L-cysteine = [E1 ubiquitin-activating enzyme]-L-cysteine + S-ubiquitinyl-[E2 ubiquitin-conjugating enzyme]-L-cysteine.. It catalyses the reaction S-ubiquitinyl-[E1 ubiquitin-activating enzyme]-L-cysteine + [acceptor protein]-L-lysine = [E1 ubiquitin-activating enzyme]-L-cysteine + N(6)-monoubiquitinyl-[acceptor protein]-L-lysine.. The protein operates within protein modification; protein ubiquitination. Functionally, accepts ubiquitin from the E1 complex and catalyzes its covalent attachment to other proteins. In vitro catalyzes 'Lys-11'- and 'Lys-48'-linked polyubiquitination. Acts as an essential factor of the anaphase promoting complex/cyclosome (APC/C), a cell cycle-regulated ubiquitin ligase that controls progression through mitosis. Acts by initiating 'Lys-11'-linked polyubiquitin chains on APC/C substrates, leading to the degradation of APC/C substrates by the proteasome and promoting mitotic exit. The protein is Ubiquitin-conjugating enzyme E2 C (UBE2C) of Homo sapiens (Human).